Here is a 632-residue protein sequence, read N- to C-terminus: Chaperone protein HtpG (632 aa).

Residues 1-343 (MSEQTINNKE…SNDLALNVSR (343 aa)) form an a; substrate-binding region. The segment at 344 to 560 (EILQDNKVTQ…DFEMGTQMAK (217 aa)) is b. A c region spans residues 561-632 (LLEAAGQAAP…LSAMNQLLSK (72 aa)).

This sequence belongs to the heat shock protein 90 family. In terms of assembly, homodimer.

Its subcellular location is the cytoplasm. In terms of biological role, molecular chaperone. Has ATPase activity. In Aliivibrio salmonicida (strain LFI1238) (Vibrio salmonicida (strain LFI1238)), this protein is Chaperone protein HtpG.